The sequence spans 1074 residues: Collagen, type I, alpha 1a (1074 aa).

The segment covering 1–13 (KSPAMPVPGPMGP) has biased composition (pro residues). Residues 1–1010 (KSPAMPVPGP…PQEKAPDPYR (1010 aa)) are disordered. Low complexity predominate over residues 14-36 (MGPRSGPQGFPGEAGAAGAMGPR). Basic and acidic residues predominate over residues 45 to 59 (NGEDGESGKPGRGGE). Low complexity predominate over residues 129–147 (TGAAGAAGARGNDGAAGAA). Positions 149-162 (PPGPTGPAGPPGFP) are enriched in pro residues. Residues 163–181 (GGPGAKGDAGAQGGRGPEG) show a composition bias toward gly residues. 3 stretches are compositionally biased toward low complexity: residues 182–225 (PAGA…AGAP), 234–272 (SGPQ…APGV), and 290–299 (EPGAAGARGA). Residues 301-313 (GERGGPGGRGFPG) show a composition bias toward gly residues. Composition is skewed to low complexity over residues 377 to 392 (VGAR…PGPK), 469 to 530 (VPGE…QGMP), and 563 to 578 (RGLT…AGAT). The segment covering 588-597 (GPVGPGGARG) has biased composition (gly residues). Low complexity-rich tracts occupy residues 611 to 647 (AGFA…AGPT) and 661 to 683 (PKGA…AGRV). Residues 685–697 (PPGPSGNPGPPGP) show a composition bias toward pro residues. Composition is skewed to low complexity over residues 715-742 (PAGR…SEGA) and 803-823 (PGLA…SEGS). A compositionally biased stretch (pro residues) spans 847–857 (APGPPGAPGPV). Over residues 871–890 (PAGPAGSAGPAGPRGPAGAP) the composition is skewed to low complexity. The span at 893–907 (RGDKGESGEAGERGH) shows a compositional bias: basic and acidic residues. The span at 920 to 956 (SGSSGEQGPAGAAGPAGPRGPAGSAGSPGKDGMSGLP) shows a compositional bias: low complexity. Residues 974–986 (AGPPGPPGPPGAP) are compositionally biased toward pro residues. In terms of domain architecture, Fibrillar collagen NC1 spans 1014–1074 (LEVDSTLKSL…GLEVGPVCFL (61 aa)).

The protein belongs to the fibrillar collagen family.

Its subcellular location is the secreted. It is found in the extracellular space. It localises to the extracellular matrix. The protein is Collagen, type I, alpha 1a of Epinephelus marginatus (Dusky grouper).